The sequence spans 491 residues: Chromosomal replication initiator protein DnaA (491 aa).

Positions 1-69 are domain I, interacts with DnaA modulators; the sequence is MTTWDKCLKK…TIQECHGNDL (69 aa). Residues 69-154 are domain II; it reads LIIEYSNKKF…KEDEEYSFGL (86 aa). Positions 155 to 371 are domain III, AAA+ region; that stretch reads PLKEKYVFDS…GALNRVLTTS (217 aa). ATP is bound by residues Gly199, Gly201, Lys202, and Thr203. A domain IV, binds dsDNA region spans residues 372–491; it reads KFNHKDPTIE…YELLLDKISR (120 aa).

Belongs to the DnaA family. Oligomerizes as a right-handed, spiral filament on DNA at oriC.

It localises to the cytoplasm. In terms of biological role, plays an essential role in the initiation and regulation of chromosomal replication. ATP-DnaA binds to the origin of replication (oriC) to initiate formation of the DNA replication initiation complex once per cell cycle. Binds the DnaA box (a 9 base pair repeat at the origin) and separates the double-stranded (ds)DNA. Forms a right-handed helical filament on oriC DNA; dsDNA binds to the exterior of the filament while single-stranded (ss)DNA is stabiized in the filament's interior. The ATP-DnaA-oriC complex binds and stabilizes one strand of the AT-rich DNA unwinding element (DUE), permitting loading of DNA polymerase. After initiation quickly degrades to an ADP-DnaA complex that is not apt for DNA replication. Binds acidic phospholipids. In Francisella tularensis subsp. holarctica (strain FTNF002-00 / FTA), this protein is Chromosomal replication initiator protein DnaA.